Consider the following 101-residue polypeptide: Venom peptide Pc (101 aa).

Positions Met1–Gly20 are cleaved as a signal peptide.

The protein belongs to the scorpion La1-like peptide family. Post-translationally, contains 4 disulfide bonds. Expressed by the venom gland.

Its subcellular location is the secreted. This Pandinus cavimanus (Tanzanian red clawed scorpion) protein is Venom peptide Pc.